The chain runs to 124 residues: Fluoride-specific ion channel FluC 1 (124 aa).

4 consecutive transmembrane segments (helical) span residues 4–24 (VLIG…GAWI), 36–56 (GTFA…GLVV), 67–87 (VVLG…LLDL), and 103–123 (AALS…LGWG). Na(+) contacts are provided by Gly75 and Thr78.

Belongs to the fluoride channel Fluc/FEX (TC 1.A.43) family.

The protein resides in the cell membrane. The enzyme catalyses fluoride(in) = fluoride(out). Na(+) is not transported, but it plays an essential structural role and its presence is essential for fluoride channel function. In terms of biological role, fluoride-specific ion channel. Important for reducing fluoride concentration in the cell, thus reducing its toxicity. The polypeptide is Fluoride-specific ion channel FluC 1 (Symbiobacterium thermophilum (strain DSM 24528 / JCM 14929 / IAM 14863 / T)).